The sequence spans 105 residues: Nitrogen fixation nifHD region glnB-like protein 1 (105 aa).

This sequence belongs to the P(II) protein family.

Could be involved in the regulation of nitrogen fixation. The polypeptide is Nitrogen fixation nifHD region glnB-like protein 1 (glnBI) (Methanococcus maripaludis (strain DSM 14266 / JCM 13030 / NBRC 101832 / S2 / LL)).